We begin with the raw amino-acid sequence, 314 residues long: MTEPLRIVFAGTPEFAAEHLKALLDSPHQIVAVYTQPDRPAGRGQKLMPSPVKQLALQHDVPVMQPPTLRDPAAQAELAALQPDLMVVVAYGLILPQVVLDIPRLGCINSHASLLPRWRGAAPIQRAVQAGDAESGVTVMRMEAGLDTGPMLLKAVTPITAQDTGGTLHDRLAELGPPAVLQAIAGLADGTLVGEVQDDSLANYAHKLNKDEARLDWTRPADELERLVRAFNPWPICHSTLNEETLKVLAADLAEGQGAPGTILGASKDGLIVACGQNALRLTRLQLPGGKPLNFTDLFNSRREKFAIGTVLGQ.

(6S)-5,6,7,8-tetrahydrofolate is bound at residue 113-116 (SLLP).

It belongs to the Fmt family.

The enzyme catalyses L-methionyl-tRNA(fMet) + (6R)-10-formyltetrahydrofolate = N-formyl-L-methionyl-tRNA(fMet) + (6S)-5,6,7,8-tetrahydrofolate + H(+). Attaches a formyl group to the free amino group of methionyl-tRNA(fMet). The formyl group appears to play a dual role in the initiator identity of N-formylmethionyl-tRNA by promoting its recognition by IF2 and preventing the misappropriation of this tRNA by the elongation apparatus. The chain is Methionyl-tRNA formyltransferase from Pseudomonas syringae pv. syringae (strain B728a).